The chain runs to 148 residues: Ribonuclease pancreatic (148 aa).

The N-terminal stretch at M1–G25 is a signal peptide. Substrate is bound by residues K32 and R35. The active-site Proton acceptor is H36. Disulfide bonds link C50-C108, C64-C119, C82-C134, and C89-C96. N58 carries an N-linked (GlcNAc...) asparagine glycan. A substrate-binding site is contributed by K65–T69. The N-linked (GlcNAc...) asparagine glycan is linked to N86. K90 and R109 together coordinate substrate. The active-site Proton donor is H143.

It belongs to the pancreatic ribonuclease family. In terms of assembly, monomer. Interacts with and forms tight 1:1 complexes with RNH1. Dimerization of two such complexes may occur. Interaction with RNH1 inhibits this protein. In terms of tissue distribution, pancreas.

The protein localises to the secreted. It carries out the reaction an [RNA] containing cytidine + H2O = an [RNA]-3'-cytidine-3'-phosphate + a 5'-hydroxy-ribonucleotide-3'-[RNA].. The enzyme catalyses an [RNA] containing uridine + H2O = an [RNA]-3'-uridine-3'-phosphate + a 5'-hydroxy-ribonucleotide-3'-[RNA].. Its function is as follows. Endonuclease that catalyzes the cleavage of RNA on the 3' side of pyrimidine nucleotides. Acts on single-stranded and double-stranded RNA. The protein is Ribonuclease pancreatic (RNASE1) of Chionomys nivalis (European snow vole).